Here is a 244-residue protein sequence, read N- to C-terminus: Protein crossbronx (244 aa).

Residues 20–176 (QQEYKILAEY…VLENIKESKE (157 aa)) enclose the UBC core domain.

It belongs to the ubiquitin-conjugating enzyme family. FTS subfamily.

This chain is Protein crossbronx (cbx), found in Drosophila persimilis (Fruit fly).